Reading from the N-terminus, the 372-residue chain is N-methyl-L-tryptophan oxidase (372 aa).

4 to 34 is a binding site for FAD; sequence DLIIIGSGSVGAAAGYYATRAGLNVLMTDAH. Cysteine 308 carries the post-translational modification S-8alpha-FAD cysteine.

The protein belongs to the MSOX/MTOX family. MTOX subfamily. In terms of assembly, monomer. FAD is required as a cofactor.

The enzyme catalyses N(alpha)-methyl-L-tryptophan + O2 + H2O = L-tryptophan + formaldehyde + H2O2. In terms of biological role, catalyzes the oxidative demethylation of N-methyl-L-tryptophan. This chain is N-methyl-L-tryptophan oxidase, found in Shigella sonnei (strain Ss046).